We begin with the raw amino-acid sequence, 840 residues long: Protein translocase subunit SecA (840 aa).

Residues Gln87, 105–109 (GEGKT), and Asp494 each bind ATP. The disordered stretch occupies residues 791-840 (LRKEQEDQPMFFGPAEGAGQKPQTRKDRKVGRNDPCPCGSGKKYKKCCGK). Zn(2+) contacts are provided by Cys826, Cys828, Cys837, and Cys838.

The protein belongs to the SecA family. As to quaternary structure, monomer and homodimer. Part of the essential Sec protein translocation apparatus which comprises SecA, SecYEG and auxiliary proteins SecDF-YajC and YidC. It depends on Zn(2+) as a cofactor.

The protein localises to the cell inner membrane. Its subcellular location is the cytoplasm. The catalysed reaction is ATP + H2O + cellular proteinSide 1 = ADP + phosphate + cellular proteinSide 2.. In terms of biological role, part of the Sec protein translocase complex. Interacts with the SecYEG preprotein conducting channel. Has a central role in coupling the hydrolysis of ATP to the transfer of proteins into and across the cell membrane, serving as an ATP-driven molecular motor driving the stepwise translocation of polypeptide chains across the membrane. This Syntrophobacter fumaroxidans (strain DSM 10017 / MPOB) protein is Protein translocase subunit SecA.